Consider the following 143-residue polypeptide: Small ribosomal subunit protein eS19x (143 aa).

The protein belongs to the eukaryotic ribosomal protein eS19 family.

The sequence is that of Small ribosomal subunit protein eS19x (RPS19C) from Arabidopsis thaliana (Mouse-ear cress).